The following is a 131-amino-acid chain: Small ribosomal subunit protein bS6 (131 aa).

A disordered region spans residues 97-131 (TEASPMVKAKDERRRDVAEDLDEEEVDDVAEDSEE). Basic and acidic residues predominate over residues 104 to 114 (KAKDERRRDVA). Over residues 115-131 (EDLDEEEVDDVAEDSEE) the composition is skewed to acidic residues.

This sequence belongs to the bacterial ribosomal protein bS6 family.

In terms of biological role, binds together with bS18 to 16S ribosomal RNA. This chain is Small ribosomal subunit protein bS6, found in Proteus mirabilis (strain HI4320).